A 64-amino-acid chain; its full sequence is Large ribosomal subunit protein bL35 (64 aa).

Belongs to the bacterial ribosomal protein bL35 family.

The sequence is that of Large ribosomal subunit protein bL35 from Shewanella baltica (strain OS223).